A 215-amino-acid polypeptide reads, in one-letter code: MKTVLLTGFDPFGGENINPAWEVAKNLHEKTIGEYKIISKQVPTVFHKSISVLKEYIEELAPEFIICIGQAGGRPDITIERVAINIDDARIADNEGNQPVDVPVVEEGPTAYWSTLPMKAIVKRLQEEGIPASVSQTAGTFVCNHLFYGLMHELEKRDKKIKGGFVHIPFLPEQASKYPGQPSMSLSTIRKGIELAVEVTMTVEVDIVEIGGATH.

Residues glutamate 80, cysteine 143, and histidine 167 contribute to the active site.

It belongs to the peptidase C15 family. As to quaternary structure, homotetramer.

Its subcellular location is the cytoplasm. It carries out the reaction Release of an N-terminal pyroglutamyl group from a polypeptide, the second amino acid generally not being Pro.. Its function is as follows. Removes 5-oxoproline from various penultimate amino acid residues except L-proline. The chain is Pyrrolidone-carboxylate peptidase from Bacillus cereus (strain ATCC 10987 / NRS 248).